The sequence spans 1403 residues: DNA-directed RNA polymerase subunit beta' (1403 aa).

Residues cysteine 70, cysteine 72, cysteine 85, and cysteine 88 each contribute to the Zn(2+) site. Mg(2+) is bound by residues aspartate 461, aspartate 463, and aspartate 465. The Zn(2+) site is built by cysteine 816, cysteine 890, cysteine 897, and cysteine 900.

Belongs to the RNA polymerase beta' chain family. In terms of assembly, the RNAP catalytic core consists of 2 alpha, 1 beta, 1 beta' and 1 omega subunit. When a sigma factor is associated with the core the holoenzyme is formed, which can initiate transcription. Mg(2+) serves as cofactor. The cofactor is Zn(2+).

It carries out the reaction RNA(n) + a ribonucleoside 5'-triphosphate = RNA(n+1) + diphosphate. Functionally, DNA-dependent RNA polymerase catalyzes the transcription of DNA into RNA using the four ribonucleoside triphosphates as substrates. This Dechloromonas aromatica (strain RCB) protein is DNA-directed RNA polymerase subunit beta'.